A 206-amino-acid polypeptide reads, in one-letter code: GTP cyclohydrolase 1 (206 aa).

Residues Cys-98, His-101, and Cys-169 each contribute to the Zn(2+) site.

It belongs to the GTP cyclohydrolase I family. As to quaternary structure, toroid-shaped homodecamer, composed of two pentamers of five dimers.

It catalyses the reaction GTP + H2O = 7,8-dihydroneopterin 3'-triphosphate + formate + H(+). The protein operates within cofactor biosynthesis; 7,8-dihydroneopterin triphosphate biosynthesis; 7,8-dihydroneopterin triphosphate from GTP: step 1/1. The polypeptide is GTP cyclohydrolase 1 (Helicobacter hepaticus (strain ATCC 51449 / 3B1)).